A 361-amino-acid polypeptide reads, in one-letter code: Chorismate synthase (361 aa).

Arg-48 and Arg-54 together coordinate NADP(+). Residues 131–133, 243–244, Gly-287, 302–306, and Arg-328 each bind FMN; these read RSS, NA, and KPTSS.

It belongs to the chorismate synthase family. As to quaternary structure, homotetramer. It depends on FMNH2 as a cofactor.

The catalysed reaction is 5-O-(1-carboxyvinyl)-3-phosphoshikimate = chorismate + phosphate. It participates in metabolic intermediate biosynthesis; chorismate biosynthesis; chorismate from D-erythrose 4-phosphate and phosphoenolpyruvate: step 7/7. Catalyzes the anti-1,4-elimination of the C-3 phosphate and the C-6 proR hydrogen from 5-enolpyruvylshikimate-3-phosphate (EPSP) to yield chorismate, which is the branch point compound that serves as the starting substrate for the three terminal pathways of aromatic amino acid biosynthesis. This reaction introduces a second double bond into the aromatic ring system. The sequence is that of Chorismate synthase from Bradyrhizobium sp. (strain BTAi1 / ATCC BAA-1182).